Reading from the N-terminus, the 84-residue chain is Mu-conotoxin-like Cal 12.2b (84 aa).

An N-terminal signal peptide occupies residues 1 to 19 (MKLTCVLVVLLLVLPFGDL). The propeptide occupies 20-42 (ITTSNTEDNKRGATPWQNSLKAR). 4 cysteine pairs are disulfide-bonded: C45–C57, C52–C65, C59–C70, and C64–C76. W72 bears the 6'-bromotryptophan mark. The residue at position 77 (P77) is a 4-hydroxyproline. W81 carries the post-translational modification 6'-bromotryptophan.

The protein belongs to the conotoxin O1 superfamily. As to expression, expressed by the venom duct.

It is found in the secreted. Functionally, mu-conotoxins block voltage-gated sodium channels. This toxin reversibly blocks voltage-gated sodium channel in cephalopods, with no alteration in the voltage dependence of sodium conductance or on the kinetics of inactivation. This Californiconus californicus (California cone) protein is Mu-conotoxin-like Cal 12.2b.